Reading from the N-terminus, the 212-residue chain is Pyridoxine/pyridoxamine 5'-phosphate oxidase (212 aa).

Substrate is bound by residues 8–11 and Lys-66; that span reads RRNY. FMN is bound by residues 61 to 66, 76 to 77, Arg-82, Lys-83, and Gln-105; these read RIVLLK and FT. Tyr-123, Arg-127, and Ser-131 together coordinate substrate. FMN contacts are provided by residues 140–141 and Trp-184; that span reads QS. A substrate-binding site is contributed by 190-192; that stretch reads RLH. Arg-194 serves as a coordination point for FMN.

This sequence belongs to the pyridoxamine 5'-phosphate oxidase family. In terms of assembly, homodimer. FMN is required as a cofactor.

It catalyses the reaction pyridoxamine 5'-phosphate + O2 + H2O = pyridoxal 5'-phosphate + H2O2 + NH4(+). The catalysed reaction is pyridoxine 5'-phosphate + O2 = pyridoxal 5'-phosphate + H2O2. Its pathway is cofactor metabolism; pyridoxal 5'-phosphate salvage; pyridoxal 5'-phosphate from pyridoxamine 5'-phosphate: step 1/1. The protein operates within cofactor metabolism; pyridoxal 5'-phosphate salvage; pyridoxal 5'-phosphate from pyridoxine 5'-phosphate: step 1/1. In terms of biological role, catalyzes the oxidation of either pyridoxine 5'-phosphate (PNP) or pyridoxamine 5'-phosphate (PMP) into pyridoxal 5'-phosphate (PLP). The sequence is that of Pyridoxine/pyridoxamine 5'-phosphate oxidase from Cupriavidus metallidurans (strain ATCC 43123 / DSM 2839 / NBRC 102507 / CH34) (Ralstonia metallidurans).